A 153-amino-acid polypeptide reads, in one-letter code: Cytochrome c-type biogenesis protein CcmE (153 aa).

The Cytoplasmic portion of the chain corresponds to 1–6; sequence MNARRR. The helical; Signal-anchor for type II membrane protein transmembrane segment at 7–27 threads the bilayer; the sequence is LWSLLMLILAVGTAATLTIMA. The Periplasmic segment spans residues 28 to 153; sequence LRRNLTYLYM…LDTPIAQTTP (126 aa). The heme site is built by His-121 and Tyr-125. Residues 130 to 141 are compositionally biased toward polar residues; sequence LTNKMQPTPTQH. Residues 130-153 are disordered; the sequence is LTNKMQPTPTQHTHLDTPIAQTTP.

It belongs to the CcmE/CycJ family.

The protein localises to the cell inner membrane. Heme chaperone required for the biogenesis of c-type cytochromes. Transiently binds heme delivered by CcmC and transfers the heme to apo-cytochromes in a process facilitated by CcmF and CcmH. The sequence is that of Cytochrome c-type biogenesis protein CcmE from Xylella fastidiosa (strain 9a5c).